The following is a 302-amino-acid chain: uncharacterized protein (302 aa).

The 60-residue stretch at 1 to 60 (MRMNMSDFATFFAVARNQSFRAAGDELGLSSSAISHSIKTLEQRLKIRLFNRTTRSVSLT) folds into the HTH lysR-type domain. Positions 20-40 (FRAAGDELGLSSSAISHSIKT) form a DNA-binding region, H-T-H motif.

The protein belongs to the LysR transcriptional regulatory family.

This is an uncharacterized protein from Escherichia coli (strain K12).